Consider the following 104-residue polypeptide: Iron-sulfur cluster assembly protein CyaY (104 aa).

It belongs to the frataxin family.

Its function is as follows. Involved in iron-sulfur (Fe-S) cluster assembly. May act as a regulator of Fe-S biogenesis. This Vibrio atlanticus (strain LGP32) (Vibrio splendidus (strain Mel32)) protein is Iron-sulfur cluster assembly protein CyaY.